Consider the following 208-residue polypeptide: Harpin secretion protein HrpW (208 aa).

The next 4 helical transmembrane spans lie at 2 to 22 (LALF…CTAF), 46 to 66 (ALYG…AHDI), 149 to 169 (IGFL…NLLL), and 176 to 196 (VSPM…VSGW).

This sequence belongs to the FliP/MopC/SpaP family.

It localises to the cell membrane. In terms of biological role, required for the secretion of harpin. This chain is Harpin secretion protein HrpW (hrpW), found in Pseudomonas syringae pv. syringae.